The chain runs to 618 residues: 1-deoxy-D-xylulose-5-phosphate synthase (618 aa).

Residues His-72 and 113–115 each bind thiamine diphosphate; that span reads GHA. Asp-144 contacts Mg(2+). Residues 145–146, Asn-173, His-284, and Glu-359 contribute to the thiamine diphosphate site; that span reads GA. Asn-173 is a Mg(2+) binding site.

The protein belongs to the transketolase family. DXPS subfamily. Homodimer. The cofactor is Mg(2+). Requires thiamine diphosphate as cofactor.

The catalysed reaction is D-glyceraldehyde 3-phosphate + pyruvate + H(+) = 1-deoxy-D-xylulose 5-phosphate + CO2. It functions in the pathway metabolic intermediate biosynthesis; 1-deoxy-D-xylulose 5-phosphate biosynthesis; 1-deoxy-D-xylulose 5-phosphate from D-glyceraldehyde 3-phosphate and pyruvate: step 1/1. In terms of biological role, catalyzes the acyloin condensation reaction between C atoms 2 and 3 of pyruvate and glyceraldehyde 3-phosphate to yield 1-deoxy-D-xylulose-5-phosphate (DXP). This chain is 1-deoxy-D-xylulose-5-phosphate synthase, found in Dictyoglomus thermophilum (strain ATCC 35947 / DSM 3960 / H-6-12).